We begin with the raw amino-acid sequence, 211 residues long: NADH-quinone oxidoreductase subunit C (211 aa).

The protein belongs to the complex I 30 kDa subunit family. NDH-1 is composed of 14 different subunits. Subunits NuoB, C, D, E, F, and G constitute the peripheral sector of the complex.

It is found in the cell inner membrane. The catalysed reaction is a quinone + NADH + 5 H(+)(in) = a quinol + NAD(+) + 4 H(+)(out). Its function is as follows. NDH-1 shuttles electrons from NADH, via FMN and iron-sulfur (Fe-S) centers, to quinones in the respiratory chain. The immediate electron acceptor for the enzyme in this species is believed to be ubiquinone. Couples the redox reaction to proton translocation (for every two electrons transferred, four hydrogen ions are translocated across the cytoplasmic membrane), and thus conserves the redox energy in a proton gradient. The sequence is that of NADH-quinone oxidoreductase subunit C from Azorhizobium caulinodans (strain ATCC 43989 / DSM 5975 / JCM 20966 / LMG 6465 / NBRC 14845 / NCIMB 13405 / ORS 571).